We begin with the raw amino-acid sequence, 222 residues long: Cytidylate kinase (222 aa).

11–19 (GPAGAGKST) serves as a coordination point for ATP.

This sequence belongs to the cytidylate kinase family. Type 1 subfamily.

Its subcellular location is the cytoplasm. The catalysed reaction is CMP + ATP = CDP + ADP. It catalyses the reaction dCMP + ATP = dCDP + ADP. In Desulforamulus reducens (strain ATCC BAA-1160 / DSM 100696 / MI-1) (Desulfotomaculum reducens), this protein is Cytidylate kinase.